A 557-amino-acid polypeptide reads, in one-letter code: TNF receptor-associated factor 5 (557 aa).

An RING-type zinc finger spans residues cysteine 45–lysine 85. 2 consecutive TRAF-type zinc fingers follow at residues aspartate 127–glutamine 181 and asparagine 182–glutamine 239. Positions asparagine 237–leucine 342 form a coiled coil. Lysine 318 is covalently cross-linked (Glycyl lysine isopeptide (Lys-Gly) (interchain with G-Cter in ubiquitin)). Residues leucine 345–leucine 557 form an interaction with EIF2AK2/PKR region. In terms of domain architecture, MATH spans asparagine 403–valine 549.

The protein belongs to the TNF receptor-associated factor family. A subfamily. Homotrimer. Heteromer with TRAF3. Associates with TNFRSF5/CD40 through interaction with TRAF3. Associates with LTBR/TNFRSF3, TNFRSF4, TNFRSF8/CD30, TNFRSF11A/RANK, TNFRSF13B/TACI, TNFRSF14, TNFRSF17, TNFRSF19/TROY, RIPK2, MAP3K14, MAP3K5, and TRAF and TNF receptor associated protein TDP2. Interacts (via C-terminus) with EIF2AK2/PKR (via the kinase catalytic domain). In terms of processing, ubiquitinated at Lys-318 by the SCF(FBXL2) complex, leading to its degradation by the proteasome. As to expression, expressed in spleen, thymus, prostate, testis, ovary, small intestine, colon, and peripheral blood.

Its subcellular location is the cytoplasm. The protein localises to the cytosol. Functionally, adapter protein and signal transducer that links members of the tumor necrosis factor receptor family to different signaling pathways by association with the receptor cytoplasmic domain and kinases. Mediates activation of NF-kappa-B and probably JNK. Seems to be involved in apoptosis. Plays a role in mediating activation of NF-kappa-B by EIF2AK2/PKR. The protein is TNF receptor-associated factor 5 (TRAF5) of Homo sapiens (Human).